The primary structure comprises 646 residues: Tyrosine-protein kinase MasK (646 aa).

Topologically, residues 1–415 are periplasmic; it reads MSPPQTTLPV…PTAGGRRWRT (415 aa). The Protein kinase domain maps to 25–300; it reads YVLVRKLAEG…AFADALETFL (276 aa). ATP-binding positions include 31–39 and K57; that span reads LAEGGMAEI. The active-site Proton acceptor is the D163. Positions 373-410 are disordered; sequence TSAQRPGMSMRPSSPGVPAHGAASRGSTSPESAPTAGG. The chain crosses the membrane as a helical span at residues 416–433; that stretch reads LAVGLAGGLMLAAAGIVG. Topologically, residues 434–646 are cytoplasmic; sequence YRQWMTTPAS…VMPFSWRVTQ (213 aa). Residues 521-547 are disordered; that stretch reads AGAASDVEAEADEEGADAAPVRSKKAS. The span at 527-536 shows a compositional bias: acidic residues; the sequence is VEAEADEEGA.

Belongs to the protein kinase superfamily. Tyr protein kinase family. Interacts with MglA. Post-translationally, autophosphorylated.

It is found in the cell inner membrane. The enzyme catalyses L-tyrosyl-[protein] + ATP = O-phospho-L-tyrosyl-[protein] + ADP + H(+). In terms of biological role, essential for growth. Interacts with MglA to control social gliding motility. The polypeptide is Tyrosine-protein kinase MasK (masK) (Myxococcus xanthus (strain DK1622)).